We begin with the raw amino-acid sequence, 146 residues long: Large ribosomal subunit protein uL11 (146 aa).

It belongs to the universal ribosomal protein uL11 family. Part of the ribosomal stalk of the 50S ribosomal subunit. Interacts with L10 and the large rRNA to form the base of the stalk. L10 forms an elongated spine to which L12 dimers bind in a sequential fashion forming a multimeric L10(L12)X complex. In terms of processing, one or more lysine residues are methylated.

In terms of biological role, forms part of the ribosomal stalk which helps the ribosome interact with GTP-bound translation factors. This Corynebacterium jeikeium (strain K411) protein is Large ribosomal subunit protein uL11.